The chain runs to 235 residues: Large ribosomal subunit protein uL1 (235 aa).

The protein belongs to the universal ribosomal protein uL1 family. As to quaternary structure, part of the 50S ribosomal subunit.

Binds directly to 23S rRNA. The L1 stalk is quite mobile in the ribosome, and is involved in E site tRNA release. Its function is as follows. Protein L1 is also a translational repressor protein, it controls the translation of the L11 operon by binding to its mRNA. This is Large ribosomal subunit protein uL1 from Micrococcus luteus (strain ATCC 4698 / DSM 20030 / JCM 1464 / CCM 169 / CCUG 5858 / IAM 1056 / NBRC 3333 / NCIMB 9278 / NCTC 2665 / VKM Ac-2230) (Micrococcus lysodeikticus).